The following is a 467-amino-acid chain: UDP-N-acetylmuramate--L-alanine ligase (467 aa).

112-118 (GTHGKTT) serves as a coordination point for ATP.

Belongs to the MurCDEF family.

It is found in the cytoplasm. It catalyses the reaction UDP-N-acetyl-alpha-D-muramate + L-alanine + ATP = UDP-N-acetyl-alpha-D-muramoyl-L-alanine + ADP + phosphate + H(+). It participates in cell wall biogenesis; peptidoglycan biosynthesis. In terms of biological role, cell wall formation. The chain is UDP-N-acetylmuramate--L-alanine ligase from Azoarcus sp. (strain BH72).